The sequence spans 152 residues: Endoribonuclease YbeY (152 aa).

H113, H117, and H123 together coordinate Zn(2+).

The protein belongs to the endoribonuclease YbeY family. The cofactor is Zn(2+).

It is found in the cytoplasm. Its function is as follows. Single strand-specific metallo-endoribonuclease involved in late-stage 70S ribosome quality control and in maturation of the 3' terminus of the 16S rRNA. This is Endoribonuclease YbeY from Paracidovorax citrulli (strain AAC00-1) (Acidovorax citrulli).